The chain runs to 324 residues: Olfactory receptor 11H4 (324 aa).

The Extracellular portion of the chain corresponds to 1-35 (MSFFFVDLRPMNRSATHIVTEFILLGFPGCWKIQI). A glycan (N-linked (GlcNAc...) asparagine) is linked at N12. A helical transmembrane segment spans residues 36 to 56 (FLFSLFLVIYVLTLLGNGAII). Residues 57–64 (YAVRCNPL) lie on the Cytoplasmic side of the membrane. A helical membrane pass occupies residues 65 to 85 (LHTPMYFLLGNFAFLEIWYVS). The Extracellular portion of the chain corresponds to 86–109 (STIPNMLVNILSKTKAISFSGCFL). A disulfide bridge connects residues C107 and C199. A helical transmembrane segment spans residues 110 to 130 (QFYFFFSLGTTECLFLAVMAY). Residues 131 to 149 (DRYLAICHPLQYPAIMTVR) are Cytoplasmic-facing. The chain crosses the membrane as a helical span at residues 150–170 (FCGKLVSFCWLIGFLGYPIPI). The Extracellular portion of the chain corresponds to 171-207 (FYISQLPFCGPNIIDHFLCDMDPLMALSCAPAPITEC). The chain crosses the membrane as a helical span at residues 208–227 (IFYTQSSLVLFFTSMYILRS). Over 228–247 (YILLLTAVFQVPSAAGRRKA) the chain is Cytoplasmic. Residues 248-268 (FSTCGSHLVVVSLFYGTVMVM) traverse the membrane as a helical segment. Residues 269 to 281 (YVSPTYGIPTLLQ) are Extracellular-facing. The helical transmembrane segment at 282–302 (KILTLVYSVTTPLFNPLIYTL) threads the bilayer. At 303-324 (RNKDMKLALRNVLFGMRIRQNS) the chain is on the cytoplasmic side.

It belongs to the G-protein coupled receptor 1 family.

It is found in the cell membrane. In terms of biological role, odorant receptor. The protein is Olfactory receptor 11H4 (OR11H4) of Homo sapiens (Human).